The primary structure comprises 585 residues: Putative phospholipase B-like 2 (585 aa).

The N-terminal stretch at 1–35 is a signal peptide; sequence MAAPMDRTHGGRAARALRRALALASLAGLLLSGLA. Asn-84, Asn-102, and Asn-106 each carry an N-linked (GlcNAc...) asparagine glycan. Cys-138 and Cys-148 are joined by a disulfide. Residues Asn-227 and Asn-432 are each glycosylated (N-linked (GlcNAc...) asparagine). Cys-488 and Cys-491 are disulfide-bonded. The N-linked (GlcNAc...) asparagine glycan is linked to Asn-511.

The protein belongs to the phospholipase B-like family. As to quaternary structure, interacts with IGF2R. Glycosylated; contains mannose 6-phosphate sugars.

It is found in the lysosome lumen. In terms of biological role, putative phospholipase. The polypeptide is Putative phospholipase B-like 2 (Plbd2) (Rattus norvegicus (Rat)).